We begin with the raw amino-acid sequence, 452 residues long: Glycoprotein endo-alpha-1,2-mannosidase-like protein (452 aa).

Topologically, residues 1 to 8 (MARRRRRA) are cytoplasmic. A helical; Signal-anchor for type II membrane protein transmembrane segment spans residues 9–29 (CIALFLVLLFAFGTLMGLRTL). At 30–452 (KAPDGLPALG…FIKEKEQWLM (423 aa)) the chain is on the lumenal side. Residues 40 to 90 (PGPELAPFERRPEGNPAPARAPAAPAAPPPPPPRTAAPRASLGPAEADPAP) form a disordered region. The segment covering 64 to 74 (PAAPPPPPPRT) has biased composition (pro residues).

The protein belongs to the glycosyl hydrolase 99 family.

Its subcellular location is the golgi apparatus membrane. The protein is Glycoprotein endo-alpha-1,2-mannosidase-like protein (Maneal) of Mus musculus (Mouse).